A 50-amino-acid chain; its full sequence is Large ribosomal subunit protein bL33 (50 aa).

It belongs to the bacterial ribosomal protein bL33 family.

This Aquifex aeolicus (strain VF5) protein is Large ribosomal subunit protein bL33 (rpmG).